The sequence spans 350 residues: NADH-cytochrome b5 reductase 2 (350 aa).

Residues 43 to 63 traverse the membrane as a helical segment; it reads PLVLALGGVAGIGAWYGLGGF. The FAD-binding FR-type domain occupies 96–204; that stretch reads DQFVEFTLKE…KGPIAKFAYK (109 aa). An FAD-binding site is contributed by 207–242; it reads EFESIGMIAGGSGITPMYQVIQDIASNPSDKTKVTL.

It belongs to the flavoprotein pyridine nucleotide cytochrome reductase family. The cofactor is FAD.

The protein localises to the mitochondrion outer membrane. The catalysed reaction is 2 Fe(III)-[cytochrome b5] + NADH = 2 Fe(II)-[cytochrome b5] + NAD(+) + H(+). Functionally, may mediate the reduction of outer membrane cytochrome b5. This is NADH-cytochrome b5 reductase 2 (MCR1) from Mycosarcoma maydis (Corn smut fungus).